Consider the following 135-residue polypeptide: Serine protease inhibitor swm-1 (135 aa).

An N-terminal signal peptide occupies residues 1–16; it reads MRILVIITCIVAVATA. 10 disulfides stabilise this stretch: C20–C53, C29–C48, C33–C44, C37–C73, C55–C67, C80–C114, C89–C109, C93–C105, C97–C133, and C116–C127. 2 TIL domains span residues 20-73 and 80-133; these read CEAN…VSEC and CPEN…KKDC. Residue N83 is glycosylated (N-linked (GlcNAc...) asparagine).

As to expression, in male, expressed in the vas deferens cuboidal cells and, in posterior body wall and male-specific diagonal muscles. In hermaphrodites, expressed in posterior body wall muscles and spermatheca.

It is found in the secreted. Its subcellular location is the cytoplasmic vesicle. It localises to the secretory vesicle lumen. Serine protease inhibitor. Probably by inhibiting serine protease tyr-5 in males, prevents the maturation of spermatids into mature motile spermatozoa until their transfer into a hermaphrodite. Also required for efficient sperm transfer and thus for male fertility. In Caenorhabditis elegans, this protein is Serine protease inhibitor swm-1.